Here is a 110-residue protein sequence, read N- to C-terminus: MGELKTMGLFLVTALAEILGCYLPYLWLTQGRSVWLLLPAGLSLMLFAWLLSLHPTAAGRVYAAYGGVYIFVAILWLWLVDGIRPSLWDLVGSLVALCGMAIIMFAPREA.

4 helical membrane passes run 8-28, 33-53, 63-83, and 87-107; these read GLFL…YLWL, SVWL…LLSL, AAYG…VDGI, and LWDL…MFAP.

This sequence belongs to the UPF0060 family.

The protein resides in the cell inner membrane. The polypeptide is UPF0060 membrane protein AHA_2410 (Aeromonas hydrophila subsp. hydrophila (strain ATCC 7966 / DSM 30187 / BCRC 13018 / CCUG 14551 / JCM 1027 / KCTC 2358 / NCIMB 9240 / NCTC 8049)).